A 152-amino-acid polypeptide reads, in one-letter code: Catabolic 3-dehydroquinase 1 (152 aa).

Catalysis depends on Y24, which acts as the Proton acceptor. Positions 75, 81, and 88 each coordinate substrate. The active-site Proton donor is the H101. Substrate contacts are provided by residues 102–103 (VS) and R112.

This sequence belongs to the type-II 3-dehydroquinase family. In terms of assembly, homododecamer. Adopts a ring-like structure, composed of an arrangement of two hexameric rings stacked on top of one another.

The enzyme catalyses 3-dehydroquinate = 3-dehydroshikimate + H2O. It functions in the pathway aromatic compound metabolism; 3,4-dihydroxybenzoate biosynthesis; 3,4-dihydroxybenzoate from 3-dehydroquinate: step 1/2. Its function is as follows. Is involved in the catabolism of quinate. Allows the utilization of quinate as carbon source via the beta-ketoadipate pathway. In Aspergillus terreus (strain NIH 2624 / FGSC A1156), this protein is Catabolic 3-dehydroquinase 1.